The chain runs to 228 residues: uncharacterized protein (228 aa).

An N-terminal signal peptide occupies residues M1 to Q16. The chain crosses the membrane as a helical span at residues L206 to L225.

This sequence to A.fulgidus AF_1225.

Its subcellular location is the membrane. This is an uncharacterized protein from Archaeoglobus fulgidus (strain ATCC 49558 / DSM 4304 / JCM 9628 / NBRC 100126 / VC-16).